The following is a 1127-amino-acid chain: Ras guanine nucleotide exchange factor F (1127 aa).

2 disordered regions span residues 1-82 and 96-154; these read MTDK…SLLN and NSGG…SSSS. 2 stretches are compositionally biased toward low complexity: residues 23-53 and 67-82; these read NQPS…TTSP and NNNN…SLLN. The segment covering 122–132 has biased composition (polar residues); sequence RTSTTLAQFSG. Positions 133–154 are enriched in low complexity; the sequence is SSLPNTENSSPPPSSSLISSSS. Kelch repeat units follow at residues 212-261, 262-311, 313-366, 367-418, and 420-469; these read GFYL…LYNN, SMYI…VESG, MIVF…MHKG, NMYV…LFQD, and IFIS…VKGN. One can recognise a LisH domain in the interval 557–589; the sequence is SHQFVLQLIMEYLERNTYHKVIAAIQKESGVLH. Residues 673–804 enclose the N-terminal Ras-GEF domain; it reads NKVQIKAATF…KLRELKKKLQ (132 aa). The Ras-GEF domain occupies 835–1062; that stretch reads DELEIARQMT…YDLNLLSESL (228 aa). The disordered stretch occupies residues 1090–1127; it reads LGSARELNNSNRDSNNITGSSSNNNSNSSNSLSPIVKL. Positions 1103–1127 are enriched in low complexity; it reads SNNITGSSSNNNSNSSNSLSPIVKL.

In terms of biological role, promotes the exchange of Ras-bound GDP by GTP. The protein is Ras guanine nucleotide exchange factor F (gefF) of Dictyostelium discoideum (Social amoeba).